Consider the following 165-residue polypeptide: Mating factor alpha-1 (165 aa).

Residues 1-19 constitute a signal peptide (or 20); it reads MRFPSIFTAVLFAASSALA. 4 propeptides span residues 20–89, 105–110, 126–131, and 147–152; these read APVN…EAEA, EAEAEA, and EADAEA.

In terms of biological role, the active factor is excreted into the culture medium by haploid cells of the alpha mating type and acts on cells of the opposite mating type (type A). It mediates the conjugation process between the two types by inhibiting the initiation of DNA synthesis in type a cells and synchronizing them with type alpha. The chain is Mating factor alpha-1 (MF(ALPHA)1) from Saccharomyces cerevisiae (strain ATCC 204508 / S288c) (Baker's yeast).